Here is a 387-residue protein sequence, read N- to C-terminus: GTPase Obg (387 aa).

One can recognise an Obg domain in the interval 1–159 (MKFVDEAIIR…RSLKLELLLL (159 aa)). The OBG-type G domain occupies 160 to 333 (ADVGLLGMPN…LAVKLLDFIA (174 aa)). GTP is bound by residues 166 to 173 (GMPNAGKS), 191 to 195 (FTTLV), 213 to 216 (DIPG), 283 to 286 (NKAD), and 314 to 316 (SAY). Residues Ser173 and Thr193 each contribute to the Mg(2+) site.

It belongs to the TRAFAC class OBG-HflX-like GTPase superfamily. OBG GTPase family. As to quaternary structure, monomer. It depends on Mg(2+) as a cofactor.

The protein localises to the cytoplasm. An essential GTPase which binds GTP, GDP and possibly (p)ppGpp with moderate affinity, with high nucleotide exchange rates and a fairly low GTP hydrolysis rate. Plays a role in control of the cell cycle, stress response, ribosome biogenesis and in those bacteria that undergo differentiation, in morphogenesis control. The sequence is that of GTPase Obg from Shewanella halifaxensis (strain HAW-EB4).